The primary structure comprises 562 residues: Urocanate hydratase (562 aa).

Residues 53–54 (GG), Q131, 177–179 (GMG), E197, R202, 243–244 (NA), 268–272 (QTSAH), 278–279 (YL), and Y327 contribute to the NAD(+) site. Residue C415 is part of the active site. G497 contributes to the NAD(+) binding site.

The protein belongs to the urocanase family. NAD(+) is required as a cofactor.

The protein localises to the cytoplasm. It carries out the reaction 4-imidazolone-5-propanoate = trans-urocanate + H2O. It participates in amino-acid degradation; L-histidine degradation into L-glutamate; N-formimidoyl-L-glutamate from L-histidine: step 2/3. Functionally, catalyzes the conversion of urocanate to 4-imidazolone-5-propionate. The chain is Urocanate hydratase from Chelativorans sp. (strain BNC1).